The following is a 434-amino-acid chain: N-acylneuraminate cytidylyltransferase (434 aa).

Met1 carries the N-acetylmethionine modification. The interval 1-42 (MDSVEKGAATSVSNPRGRPSRGRPPKLQRNSRGGQGRGVEKP) is disordered. The BC1 motif signature appears at 15–31 (PRGRPSRGRPPKLQRNS). An omega-N-methylarginine mark is found at Arg37 and Arg52. The substrate site is built by Arg52, Asn62, Arg111, Ser120, Ser122, and Gln143. The short motif at 200–206 (KRPRRQD) is the BC2 motif element. Residue Arg201 is part of the active site. A BC3 motif motif is present at residues 269–276 (KEKLKEIK).

It belongs to the CMP-NeuNAc synthase family. As to quaternary structure, homotetramer; the active enzyme is formed by a dimer of dimers.

Its subcellular location is the nucleus. It catalyses the reaction an N-acylneuraminate + CTP = a CMP-N-acyl-beta-neuraminate + diphosphate. Its pathway is amino-sugar metabolism; N-acetylneuraminate metabolism. In terms of biological role, catalyzes the activation of N-acetylneuraminic acid (NeuNAc) to cytidine 5'-monophosphate N-acetylneuraminic acid (CMP-NeuNAc), a substrate required for the addition of sialic acid. Has some activity toward NeuNAc, N-glycolylneuraminic acid (Neu5Gc) or 2-keto-3-deoxy-D-glycero-D-galacto-nononic acid (KDN). The protein is N-acylneuraminate cytidylyltransferase (CMAS) of Bos taurus (Bovine).